A 515-amino-acid polypeptide reads, in one-letter code: Cytidine and dCMP deaminase domain-containing protein 1 (515 aa).

Polar residues-rich tracts occupy residues M1–E11 and S18–T27. Disordered regions lie at residues M1–T27 and R56–K83. Basic and acidic residues predominate over residues Q60–K83. A CMP/dCMP-type deaminase 1 domain is found at G71–E169. Residues H110, C135, and C138 each contribute to the Zn(2+) site. The Nuclear export signal signature appears at N272 to L284. The 166-residue stretch at E318–E483 folds into the CMP/dCMP-type deaminase 2 domain. H399 lines the Zn(2+) pocket. E401 acts as the Proton donor in catalysis. Residues C427 and C430 each coordinate Zn(2+). Residues G481 to H515 form a disordered region. The span at E486–H515 shows a compositional bias: basic and acidic residues. The Bipartite nuclear localization signal signature appears at R489–R511.

It belongs to the cytidine and deoxycytidylate deaminase family. Requires Zn(2+) as cofactor.

It is found in the cytoplasm. It localises to the nucleus. The enzyme catalyses 2'-deoxycytidine + H2O + H(+) = 2'-deoxyuridine + NH4(+). The catalysed reaction is cytidine + H2O + H(+) = uridine + NH4(+). Catalyzes the deamination of cytidine and deoxycytidine into uridine and deoxyuridine, respectively. May play an important role in testicular development and spermatogenesis. This chain is Cytidine and dCMP deaminase domain-containing protein 1 (CDADC1), found in Macaca fascicularis (Crab-eating macaque).